Here is a 380-residue protein sequence, read N- to C-terminus: Cytochrome b (380 aa).

The next 4 membrane-spanning stretches (helical) occupy residues 34–54 (FGSL…LLAM), 78–99 (WLIR…FLHI), 114–134 (WNTG…GYVL), and 179–199 (FFAL…THLM). Positions 84 and 98 each coordinate heme b. Heme b contacts are provided by H183 and H197. An a ubiquinone-binding site is contributed by H202. 4 helical membrane-spanning segments follow: residues 227-247 (LKDI…ALFS), 289-309 (LGGV…PFLH), 321-341 (LSQT…WVGS), and 348-368 (FIII…ILFP).

This sequence belongs to the cytochrome b family. As to quaternary structure, the cytochrome bc1 complex contains 11 subunits: 3 respiratory subunits (MT-CYB, CYC1 and UQCRFS1), 2 core proteins (UQCRC1 and UQCRC2) and 6 low-molecular weight proteins (UQCRH/QCR6, UQCRB/QCR7, UQCRQ/QCR8, UQCR10/QCR9, UQCR11/QCR10 and a cleavage product of UQCRFS1). This cytochrome bc1 complex then forms a dimer. Heme b serves as cofactor.

It localises to the mitochondrion inner membrane. Component of the ubiquinol-cytochrome c reductase complex (complex III or cytochrome b-c1 complex) that is part of the mitochondrial respiratory chain. The b-c1 complex mediates electron transfer from ubiquinol to cytochrome c. Contributes to the generation of a proton gradient across the mitochondrial membrane that is then used for ATP synthesis. This is Cytochrome b (MT-CYB) from Tragopan satyra (Satyr tragopan).